The chain runs to 218 residues: Cell division protein SepF (218 aa).

Residues 25–115 (DVAASTDNVI…IANRREQYQQ (91 aa)) are disordered. The span at 29-43 (STDNVIPRSQQSVRA) shows a compositional bias: polar residues. The segment covering 47 to 63 (PKQEPRNNHVQQDHQAR) has biased composition (basic and acidic residues). Residues 102–115 (STSSIANRREQYQQ) show a composition bias toward polar residues.

It belongs to the SepF family. In terms of assembly, homodimer. Interacts with FtsZ.

It localises to the cytoplasm. Cell division protein that is part of the divisome complex and is recruited early to the Z-ring. Probably stimulates Z-ring formation, perhaps through the cross-linking of FtsZ protofilaments. Its function overlaps with FtsA. This chain is Cell division protein SepF, found in Streptococcus pyogenes serotype M5 (strain Manfredo).